Here is a 131-residue protein sequence, read N- to C-terminus: Fluoride-specific ion channel FluC (131 aa).

3 helical membrane-spanning segments follow: residues 3–23, 34–54, and 62–82; these read AAANLPAFLAVGAGAALGAWL, IFLTIPFGTLAANLLGGLLMG, and AVPAMSPVLKLLLTTGFLGGL. Na(+) is bound by residues glycine 80 and threonine 83. Residues 101–121 form a helical membrane-spanning segment; that stretch reads WGWLALHAAVHVAGSLLMAWI.

Belongs to the fluoride channel Fluc/FEX (TC 1.A.43) family.

It localises to the cell inner membrane. The catalysed reaction is fluoride(in) = fluoride(out). Na(+) is not transported, but it plays an essential structural role and its presence is essential for fluoride channel function. Functionally, fluoride-specific ion channel. Important for reducing fluoride concentration in the cell, thus reducing its toxicity. The protein is Fluoride-specific ion channel FluC of Aromatoleum aromaticum (strain DSM 19018 / LMG 30748 / EbN1) (Azoarcus sp. (strain EbN1)).